The chain runs to 301 residues: Sulfate adenylyltransferase subunit 2 (301 aa).

The tract at residues 278–301 (ERQGRLIDGDEPASMERKKREGYF) is disordered.

It belongs to the PAPS reductase family. CysD subfamily. As to quaternary structure, sulfate-activating enzymes, NodP and NodQ, may be physically associated.

The catalysed reaction is sulfate + ATP + H(+) = adenosine 5'-phosphosulfate + diphosphate. Its function is as follows. Proposed to provide activated sulfate for transfer to nod factor. The polypeptide is Sulfate adenylyltransferase subunit 2 (nodP) (Azospirillum brasilense).